A 288-amino-acid polypeptide reads, in one-letter code: Inositol monophosphatase 2 (288 aa).

Glu-81, Asp-101, Ile-103, and Asp-104 together coordinate Mg(2+). Residue Glu-81 participates in substrate binding. Substrate contacts are provided by residues 103–106 (IDGT), 205–207 (GSS), Gln-224, and Asp-231. Asp-231 provides a ligand contact to Mg(2+).

The protein belongs to the inositol monophosphatase superfamily. In terms of assembly, homodimer. Mg(2+) serves as cofactor.

The protein resides in the cytoplasm. It catalyses the reaction a myo-inositol phosphate + H2O = myo-inositol + phosphate. The catalysed reaction is 1D-myo-inositol 1-phosphate + H2O = myo-inositol + phosphate. It carries out the reaction 1D-myo-inositol 2-phosphate + H2O = myo-inositol + phosphate. The enzyme catalyses 1D-myo-inositol 3-phosphate + H2O = myo-inositol + phosphate. It catalyses the reaction 1D-myo-inositol 4-phosphate + H2O = myo-inositol + phosphate. The catalysed reaction is 1D-myo-inositol 5-phosphate + H2O = myo-inositol + phosphate. It carries out the reaction 1D-myo-inositol 6-phosphate + H2O = myo-inositol + phosphate. The enzyme catalyses alpha-D-glucose 1-phosphate + H2O = D-glucose + phosphate. It catalyses the reaction glycerol 2-phosphate + H2O = glycerol + phosphate. The catalysed reaction is adenosine 2'-phosphate + H2O = adenosine + phosphate. Its pathway is polyol metabolism; myo-inositol biosynthesis; myo-inositol from D-glucose 6-phosphate: step 2/2. With respect to regulation, inhibited by high Li(+) and restricted Mg(2+) concentrations. Its function is as follows. Phosphatase that can use myo-inositol monophosphates, myo-inositol 1,4-diphosphate, scyllo-inositol-1,4-diphosphate, glucose-1-phosphate, beta-glycerophosphate and 2'-AMP as substrates in vitro. It is likely that IMPA2 has an as yet unidentified in vivo substrate(s). Has been implicated as the pharmacological target for lithium (Li(+)) action in brain. The protein is Inositol monophosphatase 2 of Homo sapiens (Human).